Reading from the N-terminus, the 69-residue chain is Cytochrome c oxidase subunit 8A, mitochondrial (69 aa).

The transit peptide at 1–25 (MSVLTPLLLRGLTGSARRLPVPRAK) directs the protein to the mitochondrion. Positions 2-19 (SVLTPLLLRGLTGSARRL) match the SIFI-degron motif. At 26–36 (IHSLPPEEKLG) the chain is on the mitochondrial matrix side. A helical transmembrane segment spans residues 37-60 (IMELAVGLTSCFVTFLLPAGWILS). The Mitochondrial intermembrane portion of the chain corresponds to 61–69 (HLETYRRPE).

This sequence belongs to the cytochrome c oxidase VIII family. As to quaternary structure, component of the cytochrome c oxidase (complex IV, CIV), a multisubunit enzyme composed of 14 subunits. The complex is composed of a catalytic core of 3 subunits MT-CO1, MT-CO2 and MT-CO3, encoded in the mitochondrial DNA, and 11 supernumerary subunits COX4I, COX5A, COX5B, COX6A, COX6B, COX6C, COX7A, COX7B, COX7C, COX8 and NDUFA4, which are encoded in the nuclear genome. The complex exists as a monomer or a dimer and forms supercomplexes (SCs) in the inner mitochondrial membrane with NADH-ubiquinone oxidoreductase (complex I, CI) and ubiquinol-cytochrome c oxidoreductase (cytochrome b-c1 complex, complex III, CIII), resulting in different assemblies (supercomplex SCI(1)III(2)IV(1) and megacomplex MCI(2)III(2)IV(2)). In terms of processing, in response to mitochondrial stress, the precursor protein is ubiquitinated by the SIFI complex in the cytoplasm before mitochondrial import, leading to its degradation. Within the SIFI complex, UBR4 initiates ubiquitin chain that are further elongated or branched by KCMF1.

It localises to the mitochondrion inner membrane. It functions in the pathway energy metabolism; oxidative phosphorylation. Functionally, component of the cytochrome c oxidase, the last enzyme in the mitochondrial electron transport chain which drives oxidative phosphorylation. The respiratory chain contains 3 multisubunit complexes succinate dehydrogenase (complex II, CII), ubiquinol-cytochrome c oxidoreductase (cytochrome b-c1 complex, complex III, CIII) and cytochrome c oxidase (complex IV, CIV), that cooperate to transfer electrons derived from NADH and succinate to molecular oxygen, creating an electrochemical gradient over the inner membrane that drives transmembrane transport and the ATP synthase. Cytochrome c oxidase is the component of the respiratory chain that catalyzes the reduction of oxygen to water. Electrons originating from reduced cytochrome c in the intermembrane space (IMS) are transferred via the dinuclear copper A center (CU(A)) of subunit 2 and heme A of subunit 1 to the active site in subunit 1, a binuclear center (BNC) formed by heme A3 and copper B (CU(B)). The BNC reduces molecular oxygen to 2 water molecules using 4 electrons from cytochrome c in the IMS and 4 protons from the mitochondrial matrix. This Hylobates agilis (Agile gibbon) protein is Cytochrome c oxidase subunit 8A, mitochondrial (COX8A).